Here is a 191-residue protein sequence, read N- to C-terminus: Holliday junction branch migration complex subunit RuvA (191 aa).

The tract at residues 1–64 (MIGTLSGIIE…DNVPQLYGFT (64 aa)) is domain I. The domain II stretch occupies residues 65-145 (DTEEQNCLKM…FNIMDKRGPS (81 aa)). Positions 146–149 (VEDS) are flexible linker. The segment at 149 to 191 (SDALSALLSLGYEKTRVLNALEKVGVSHNLSDTVRFALKELSK) is domain III.

This sequence belongs to the RuvA family. Homotetramer. Forms an RuvA(8)-RuvB(12)-Holliday junction (HJ) complex. HJ DNA is sandwiched between 2 RuvA tetramers; dsDNA enters through RuvA and exits via RuvB. An RuvB hexamer assembles on each DNA strand where it exits the tetramer. Each RuvB hexamer is contacted by two RuvA subunits (via domain III) on 2 adjacent RuvB subunits; this complex drives branch migration. In the full resolvosome a probable DNA-RuvA(4)-RuvB(12)-RuvC(2) complex forms which resolves the HJ.

It is found in the cytoplasm. The RuvA-RuvB-RuvC complex processes Holliday junction (HJ) DNA during genetic recombination and DNA repair, while the RuvA-RuvB complex plays an important role in the rescue of blocked DNA replication forks via replication fork reversal (RFR). RuvA specifically binds to HJ cruciform DNA, conferring on it an open structure. The RuvB hexamer acts as an ATP-dependent pump, pulling dsDNA into and through the RuvAB complex. HJ branch migration allows RuvC to scan DNA until it finds its consensus sequence, where it cleaves and resolves the cruciform DNA. The polypeptide is Holliday junction branch migration complex subunit RuvA (Anaplasma phagocytophilum (strain HZ)).